We begin with the raw amino-acid sequence, 537 residues long: Syncytin-2 (537 aa).

The signal sequence occupies residues Met1 to Ala15. At Ala16–Lys478 the chain is on the extracellular side. Residues Cys43–Cys46 carry the CXXC motif. Disulfide bonds link Cys43/Cys46, Cys43/Cys439, and Cys431/Cys438. N-linked (GlcNAc...) asparagine glycosylation is found at Asn133, Asn146, Asn177, Asn220, Asn241, Asn247, Asn312, and Asn332. Residues Phe354–Ile374 form a fusion peptide region. Residues Leu414–Ile430 carry the CKS-17 motif. Residues Cys431–Cys439 carry the CX6CC motif. Asn443 carries N-linked (GlcNAc...) asparagine glycosylation. A helical transmembrane segment spans residues Trp479 to Phe499. Residues Gly500–Phe537 lie on the Cytoplasmic side of the membrane.

It belongs to the gamma type-C retroviral envelope protein family. HERV class-I FRD env subfamily. In terms of assembly, the surface and transmembrane proteins form a heterodimer. They are attached by non-covalent interactions or by a labile interchain disulfide bond. Specific enzymatic cleavages in vivo yield the mature SU and TM proteins. Post-translationally, the CXXC motif is highly conserved across a broad range of retroviral envelope proteins. It is thought to participate in the formation of a labile disulfide bond possibly with the CX6CC motif present in the transmembrane protein.

The protein localises to the virion. The protein resides in the cell membrane. This endogenous retroviral envelope protein has retained its original fusogenic properties and participates in trophoblast fusion and the formation of a syncytium during placenta morphogenesis. The interaction with MFSD2A is apparently important for this process. Its function is as follows. Endogenous envelope proteins may have kept, lost or modified their original function during evolution but this one can still make pseudotypes with MLV, HIV-1 or SIV-1 virions and confer infectivity. Retroviral envelope proteins mediate receptor recognition and membrane fusion during early infection. The surface protein mediates receptor recognition, while the transmembrane protein anchors the envelope heterodimer to the viral membrane through one transmembrane domain. The other hydrophobic domain, called fusion peptide, mediates fusion of the viral membrane with the target cell membrane. The polypeptide is Syncytin-2 (ERVFRD-1) (Macaca fascicularis (Crab-eating macaque)).